The sequence spans 149 residues: Large ribosomal subunit protein bL9 (149 aa).

This sequence belongs to the bacterial ribosomal protein bL9 family.

Its function is as follows. Binds to the 23S rRNA. The protein is Large ribosomal subunit protein bL9 of Geobacillus thermodenitrificans (strain NG80-2).